Here is a 235-residue protein sequence, read N- to C-terminus: Phosphoribosylaminoimidazole-succinocarboxamide synthase (235 aa).

Belongs to the SAICAR synthetase family.

It carries out the reaction 5-amino-1-(5-phospho-D-ribosyl)imidazole-4-carboxylate + L-aspartate + ATP = (2S)-2-[5-amino-1-(5-phospho-beta-D-ribosyl)imidazole-4-carboxamido]succinate + ADP + phosphate + 2 H(+). It functions in the pathway purine metabolism; IMP biosynthesis via de novo pathway; 5-amino-1-(5-phospho-D-ribosyl)imidazole-4-carboxamide from 5-amino-1-(5-phospho-D-ribosyl)imidazole-4-carboxylate: step 1/2. This is Phosphoribosylaminoimidazole-succinocarboxamide synthase from Streptococcus mutans serotype c (strain ATCC 700610 / UA159).